The following is a 185-amino-acid chain: ATP synthase subunit delta (185 aa).

Belongs to the ATPase delta chain family. F-type ATPases have 2 components, F(1) - the catalytic core - and F(0) - the membrane proton channel. F(1) has five subunits: alpha(3), beta(3), gamma(1), delta(1), epsilon(1). CF(0) has four main subunits: a(1), b(1), b'(1) and c(10-14). The alpha and beta chains form an alternating ring which encloses part of the gamma chain. F(1) is attached to F(0) by a central stalk formed by the gamma and epsilon chains, while a peripheral stalk is formed by the delta, b and b' chains.

It is found in the cellular thylakoid membrane. In terms of biological role, f(1)F(0) ATP synthase produces ATP from ADP in the presence of a proton or sodium gradient. F-type ATPases consist of two structural domains, F(1) containing the extramembraneous catalytic core and F(0) containing the membrane proton channel, linked together by a central stalk and a peripheral stalk. During catalysis, ATP synthesis in the catalytic domain of F(1) is coupled via a rotary mechanism of the central stalk subunits to proton translocation. Its function is as follows. This protein is part of the stalk that links CF(0) to CF(1). It either transmits conformational changes from CF(0) to CF(1) or is implicated in proton conduction. This is ATP synthase subunit delta from Acaryochloris marina (strain MBIC 11017).